The primary structure comprises 127 residues: HTH-type transcriptional regulator ImmR (127 aa).

A compositionally biased stretch (basic and acidic residues) spans 1–12 (MSLGKRLKEARQ). The interval 1 to 22 (MSLGKRLKEARQKAGYTQKEAA) is disordered. In terms of domain architecture, HTH cro/C1-type spans 7–61 (LKEARQKAGYTQKEAAEKLNIGNNNLSNYERDYRDPDTDTLLKLSNLYNVSTDYL). The H-T-H motif DNA-binding region spans 18–37 (QKEAAEKLNIGNNNLSNYER).

The chain is HTH-type transcriptional regulator ImmR (immR) from Bacillus subtilis (strain 168).